The chain runs to 459 residues: Cysteine--tRNA ligase (459 aa).

Residue Cys28 participates in Zn(2+) binding. The short motif at 30-40 is the 'HIGH' region element; that stretch reads VTVYDLCHFGH. 3 residues coordinate Zn(2+): Cys209, His234, and Glu238. Residues 266-270 carry the 'KMSKS' region motif; sequence KMSKS. Position 269 (Lys269) interacts with ATP.

The protein belongs to the class-I aminoacyl-tRNA synthetase family. In terms of assembly, monomer. Zn(2+) is required as a cofactor.

The protein localises to the cytoplasm. It carries out the reaction tRNA(Cys) + L-cysteine + ATP = L-cysteinyl-tRNA(Cys) + AMP + diphosphate. The polypeptide is Cysteine--tRNA ligase (Actinobacillus pleuropneumoniae serotype 5b (strain L20)).